We begin with the raw amino-acid sequence, 249 residues long: Octanoyltransferase (249 aa).

The region spanning P53–T234 is the BPL/LPL catalytic domain. Residues R93 to H100, A165 to G167, and G178 to S180 contribute to the substrate site. C196 serves as the catalytic Acyl-thioester intermediate.

Belongs to the LipB family.

It localises to the cytoplasm. The enzyme catalyses octanoyl-[ACP] + L-lysyl-[protein] = N(6)-octanoyl-L-lysyl-[protein] + holo-[ACP] + H(+). It functions in the pathway protein modification; protein lipoylation via endogenous pathway; protein N(6)-(lipoyl)lysine from octanoyl-[acyl-carrier-protein]: step 1/2. Catalyzes the transfer of endogenously produced octanoic acid from octanoyl-acyl-carrier-protein onto the lipoyl domains of lipoate-dependent enzymes. Lipoyl-ACP can also act as a substrate although octanoyl-ACP is likely to be the physiological substrate. This Burkholderia mallei (strain NCTC 10247) protein is Octanoyltransferase.